The primary structure comprises 396 residues: Fumarate--(S)-2,3-diaminopropanoate ligase (396 aa).

The catalysed reaction is (S)-2,3-diaminopropanoate + fumarate + ATP = N(3)-fumaroyl-(S)-2,3-diaminopropanoate + AMP + diphosphate. Its pathway is antibiotic biosynthesis. In terms of biological role, involved in dapdiamide antibiotics biosynthesis. Ligates fumarate and 2,3-diaminopropionate (DAP) to form N-beta-fumaroyl-DAP. Can also form N-succinoyl-DAP from succinate and DAP, with lower efficiency. This is Fumarate--(S)-2,3-diaminopropanoate ligase from Enterobacter agglomerans (Erwinia herbicola).